Consider the following 647-residue polypeptide: Macrolide export ATP-binding/permease protein MacB (647 aa).

The region spanning 5–243 (LELKGIERSY…TQTPSLTSKI (239 aa)) is the ABC transporter domain. 41–48 (GASGSGKS) is an ATP binding site. 4 helical membrane-spanning segments follow: residues 272–292 (LLTMLGIIIGIASVVTILVIG), 522–542 (LFLTMVAVISLIVGGIGVMNI), 576–596 (ILVCLVGGVLGIGLSYTIAFI), and 610–630 (PIALLSAFACSTAIGVIFGFL).

The protein belongs to the ABC transporter superfamily. Macrolide exporter (TC 3.A.1.122) family. In terms of assembly, homodimer. Part of the tripartite efflux system MacAB-TolC, which is composed of an inner membrane transporter, MacB, a periplasmic membrane fusion protein, MacA, and an outer membrane component, TolC. The complex forms a large protein conduit and can translocate molecules across both the inner and outer membranes. Interacts with MacA.

Its subcellular location is the cell inner membrane. Its function is as follows. Part of the tripartite efflux system MacAB-TolC. MacB is a non-canonical ABC transporter that contains transmembrane domains (TMD), which form a pore in the inner membrane, and an ATP-binding domain (NBD), which is responsible for energy generation. Confers resistance against macrolides. The polypeptide is Macrolide export ATP-binding/permease protein MacB (Photorhabdus laumondii subsp. laumondii (strain DSM 15139 / CIP 105565 / TT01) (Photorhabdus luminescens subsp. laumondii)).